We begin with the raw amino-acid sequence, 437 residues long: ATP-dependent protease ATPase subunit HslU (437 aa).

ATP contacts are provided by residues valine 18, 60-65 (GCGKTE), aspartate 250, glutamate 315, and arginine 387.

This sequence belongs to the ClpX chaperone family. HslU subfamily. A double ring-shaped homohexamer of HslV is capped on each side by a ring-shaped HslU homohexamer. The assembly of the HslU/HslV complex is dependent on binding of ATP.

Its subcellular location is the cytoplasm. ATPase subunit of a proteasome-like degradation complex; this subunit has chaperone activity. The binding of ATP and its subsequent hydrolysis by HslU are essential for unfolding of protein substrates subsequently hydrolyzed by HslV. HslU recognizes the N-terminal part of its protein substrates and unfolds these before they are guided to HslV for hydrolysis. This Methylobacterium nodulans (strain LMG 21967 / CNCM I-2342 / ORS 2060) protein is ATP-dependent protease ATPase subunit HslU.